The primary structure comprises 20 residues: FFPIIAGMAAKVICAITKKC.

Residues Cys-14 and Cys-20 are joined by a disulfide bond.

Expressed by the skin glands.

Its subcellular location is the secreted. Its function is as follows. Antimicrobial peptide with activity against Gram-negative and Gram-positive bacteria (MIC=13 uM against E.coli, MIC=3 uM against S.aureus) and fungi (MIC=3 uM against C.albicans). Shows hemolytic activity on human erythrocytes (HC(50)=8 uM). The protein is Brevinin-1SPd of Lithobates septentrionalis (Mink frog).